The primary structure comprises 102 residues: Ferredoxin (102 aa).

2 4Fe-4S ferredoxin-type domains span residues 45–73 (VSVN…ELVE) and 74–102 (TWIE…EVMK). The [4Fe-4S] cluster site is built by cysteine 54, cysteine 57, cysteine 60, cysteine 64, cysteine 83, cysteine 86, cysteine 89, and cysteine 93.

The cofactor is [4Fe-4S] cluster.

It functions in the pathway membrane lipid metabolism; glycerophospholipid metabolism. Ferredoxin that is the specific electron donor for the geranylgeranyl reductase GGR involved in the biosynthesis of archaeal membrane lipids. In Methanosarcina acetivorans (strain ATCC 35395 / DSM 2834 / JCM 12185 / C2A), this protein is Ferredoxin.